We begin with the raw amino-acid sequence, 587 residues long: NADH-quinone oxidoreductase subunit C/D (587 aa).

Residues 1-178 form an NADH dehydrogenase I subunit C region; it reads MAAPTTEHAE…EPFSLPDDVQ (178 aa). Residues 202 to 587 are NADH dehydrogenase I subunit D; that stretch reads DFLFLNLGPN…IDFVMADVDR (386 aa).

It in the N-terminal section; belongs to the complex I 30 kDa subunit family. The protein in the C-terminal section; belongs to the complex I 49 kDa subunit family. In terms of assembly, NDH-1 is composed of 13 different subunits. Subunits NuoB, CD, E, F, and G constitute the peripheral sector of the complex.

The protein localises to the cell inner membrane. The catalysed reaction is a quinone + NADH + 5 H(+)(in) = a quinol + NAD(+) + 4 H(+)(out). Functionally, NDH-1 shuttles electrons from NADH, via FMN and iron-sulfur (Fe-S) centers, to quinones in the respiratory chain. The immediate electron acceptor for the enzyme in this species is believed to be ubiquinone. Couples the redox reaction to proton translocation (for every two electrons transferred, four hydrogen ions are translocated across the cytoplasmic membrane), and thus conserves the redox energy in a proton gradient. The polypeptide is NADH-quinone oxidoreductase subunit C/D (Methylococcus capsulatus (strain ATCC 33009 / NCIMB 11132 / Bath)).